Here is a 410-residue protein sequence, read N- to C-terminus: MTGTSLTDTSSGLYFRDHSQGWLLRAQKQISYEVRLRDGIFRPECTDLLEQGAGTPGRSRRFVVVDSNVDLMYGNRIRSYFDYHGVDCSIMVVEANETLKNLETATRIVDEIDAFGIARRKEPLIVIGGGVLMDIVGLVASLYRRGAPFVRVPTTLIGLVDAGVGVKTGVNFNGHKNRLGTYTPADLTLLDRQFLATLDRRHIGNGLAEILKIALIKDLSLFAALEEHGPTLLDEKFQGSTAAGDRAARSVLHSAIHGMLDELQPNLWEAELERCVDYGHTFSPTVEMRALPELLHGEAVCVDMALTTVIAWRRGLLTEAQRDRIFAVMAALELPSWHPILDPDVLVNALQDTVRHRDGLQRLPLPVGIGGVTFVNDVTPRELEAAVTLQQELGDARTPKTSGDRGGRNL.

Residues Asp-66, 97 to 100 (ETLK), 130 to 134 (GVLMD), 154 to 155 (TT), Lys-167, Lys-176, and 194 to 197 (FLAT) contribute to the NAD(+) site. The active site involves Lys-167. Glu-209, His-280, and His-296 together coordinate a divalent metal cation.

It belongs to the sugar phosphate cyclases superfamily. EEVS family. It depends on NAD(+) as a cofactor. Requires Co(2+) as cofactor.

The catalysed reaction is D-sedoheptulose 7-phosphate = 2-epi-5-epi-valiolone + phosphate. In terms of biological role, catalyzes the cyclization of D-sedoheptulose 7-phosphate to 2-epi-5-epi-valiolone. Involved in salbostatin biosynthesis. In Streptomyces albus (strain ATCC 21838 / DSM 41398 / FERM P-419 / JCM 4703 / NBRC 107858), this protein is 2-epi-5-epi-valiolone synthase.